A 286-amino-acid chain; its full sequence is ATP synthase gamma chain (286 aa).

The protein belongs to the ATPase gamma chain family. As to quaternary structure, F-type ATPases have 2 components, CF(1) - the catalytic core - and CF(0) - the membrane proton channel. CF(1) has five subunits: alpha(3), beta(3), gamma(1), delta(1), epsilon(1). CF(0) has three main subunits: a, b and c.

The protein resides in the cell inner membrane. Its function is as follows. Produces ATP from ADP in the presence of a proton gradient across the membrane. The gamma chain is believed to be important in regulating ATPase activity and the flow of protons through the CF(0) complex. In Pseudomonas savastanoi pv. phaseolicola (strain 1448A / Race 6) (Pseudomonas syringae pv. phaseolicola (strain 1448A / Race 6)), this protein is ATP synthase gamma chain.